The following is a 347-amino-acid chain: Protein FAM50 homolog (347 aa).

The segment covering 77–113 (EDIVREREKKLAQKKEEKDREKLKALEAKQAEKDRQR) has biased composition (basic and acidic residues). Residues 77-142 (EDIVREREKK…EDEEEPLEIK (66 aa)) form a disordered region. A compositionally biased stretch (acidic residues) spans 123 to 138 (PEEDEESFDDEDEEEP).

The protein belongs to the FAM50 family.

This Aedes aegypti (Yellowfever mosquito) protein is Protein FAM50 homolog.